A 931-amino-acid chain; its full sequence is Isoleucine--tRNA ligase (931 aa).

The 'HIGH' region signature appears at 58 to 68; the sequence is PYANGHLHCGH. Residue Glu559 coordinates L-isoleucyl-5'-AMP. Positions 600 to 604 match the 'KMSKS' region motif; the sequence is KLSKS. Lys603 contacts ATP. The Zn(2+) site is built by Cys894, Cys897, Cys914, and Cys917.

This sequence belongs to the class-I aminoacyl-tRNA synthetase family. IleS type 1 subfamily. In terms of assembly, monomer. The cofactor is Zn(2+).

The protein localises to the cytoplasm. The catalysed reaction is tRNA(Ile) + L-isoleucine + ATP = L-isoleucyl-tRNA(Ile) + AMP + diphosphate. Functionally, catalyzes the attachment of isoleucine to tRNA(Ile). As IleRS can inadvertently accommodate and process structurally similar amino acids such as valine, to avoid such errors it has two additional distinct tRNA(Ile)-dependent editing activities. One activity is designated as 'pretransfer' editing and involves the hydrolysis of activated Val-AMP. The other activity is designated 'posttransfer' editing and involves deacylation of mischarged Val-tRNA(Ile). The protein is Isoleucine--tRNA ligase of Legionella pneumophila (strain Lens).